A 300-amino-acid polypeptide reads, in one-letter code: Bifunctional protein FolD (300 aa).

Residues 169-171, Ser-196, and Ile-237 each bind NADP(+); that span reads GRG.

This sequence belongs to the tetrahydrofolate dehydrogenase/cyclohydrolase family. In terms of assembly, homodimer.

It carries out the reaction (6R)-5,10-methylene-5,6,7,8-tetrahydrofolate + NADP(+) = (6R)-5,10-methenyltetrahydrofolate + NADPH. The enzyme catalyses (6R)-5,10-methenyltetrahydrofolate + H2O = (6R)-10-formyltetrahydrofolate + H(+). It participates in one-carbon metabolism; tetrahydrofolate interconversion. Its function is as follows. Catalyzes the oxidation of 5,10-methylenetetrahydrofolate to 5,10-methenyltetrahydrofolate and then the hydrolysis of 5,10-methenyltetrahydrofolate to 10-formyltetrahydrofolate. The sequence is that of Bifunctional protein FolD from Clavibacter michiganensis subsp. michiganensis (strain NCPPB 382).